A 967-amino-acid chain; its full sequence is Isoleucine--tRNA ligase (967 aa).

The 'HIGH' region signature appears at Pro64 to His74. Residue Glu600 participates in L-isoleucyl-5'-AMP binding. The short motif at Lys641–Ser645 is the 'KMSKS' region element. Lys644 serves as a coordination point for ATP.

Belongs to the class-I aminoacyl-tRNA synthetase family. IleS type 1 subfamily. As to quaternary structure, monomer.

It is found in the cytoplasm. It carries out the reaction tRNA(Ile) + L-isoleucine + ATP = L-isoleucyl-tRNA(Ile) + AMP + diphosphate. Its function is as follows. Catalyzes the attachment of isoleucine to tRNA(Ile). As IleRS can inadvertently accommodate and process structurally similar amino acids such as valine, to avoid such errors it has two additional distinct tRNA(Ile)-dependent editing activities. One activity is designated as 'pretransfer' editing and involves the hydrolysis of activated Val-AMP. The other activity is designated 'posttransfer' editing and involves deacylation of mischarged Val-tRNA(Ile). This is Isoleucine--tRNA ligase from Agrobacterium fabrum (strain C58 / ATCC 33970) (Agrobacterium tumefaciens (strain C58)).